We begin with the raw amino-acid sequence, 505 residues long: MLVSLSLSSLLTLFFIMLMASGISGLLFLHPRVPLSFVRIHIGILALPLLVSLLILANSGVSGNVGPWHLDSLACLMTFFVLAIGFIIQRFSVRYLMGDRSYRKYFTLFTFTTGAASMTWLSGDLRLMVLFWGATLVGLTLLIRLNSAWQVASEAAKISGRLFLLSWFSLFFAMMWLFHATGQWQLSLVVTNESLAGLGEWERTGIQLLIVLAVIIPAAQWPFQRWLVESIVAPTPVSAIMHAGLVNAGGIILTRFSPLFHGGIASIILLLLASISVLIGTGISLVQVDYKRQLVGSTIGQMGFMLIQCALGAYIAAIIHLILHGLFKATLFLQAGSAVGRHEVSTRTNERTSYLWVMAGRILSLVIGVAFWLTAPGDGYHLISALILGWSLSVSWDQLVAFGEGRIGRIAGLTVLGGAALVYFIIHHLFYKWLHTTIFQSVQPPMSAVMIVVCLLLFGSALGTWVARHRSSVFFAVLYLWLVRLGEAKPKSVESHPDYLKQYIS.

13 helical membrane passes run 9–29 (SLLT…LLFL), 37–57 (FVRI…LILA), 68–88 (WHLD…GFII), 105–123 (YFTL…WLSG), 162–182 (LFLL…HATG), 204–224 (TGIQ…WPFQ), 231–251 (IVAP…AGGI), 259–279 (LFHG…SVLI), 303–323 (GFML…HLIL), 355–375 (LWVM…WLTA), 382–402 (LISA…LVAF), 410–430 (IAGL…HHLF), and 446–466 (MSAV…GTWV).

This sequence belongs to the inorganic carbon transporter (TC 9.A.2) DabB family. As to quaternary structure, forms a complex with DabA.

The protein resides in the cell membrane. Part of an energy-coupled inorganic carbon pump. The sequence is that of Probable inorganic carbon transporter subunit DabB from Bacillus subtilis (strain 168).